A 274-amino-acid chain; its full sequence is Lipoprotein E (274 aa).

Positions 1–20 are cleaved as a signal peptide; it reads MKTTLKMTALAALSAFVLAG. Cysteine 21 carries the N-palmitoyl cysteine lipid modification. A lipid anchor (S-diacylglycerol cysteine) is attached at cysteine 21.

It is found in the cell outer membrane. The polypeptide is Lipoprotein E (hel) (Haemophilus influenzae (strain ATCC 51907 / DSM 11121 / KW20 / Rd)).